The sequence spans 583 residues: Putative fatty-acid--CoA ligase fadD25 (583 aa).

3 helical membrane passes run 77-97, 109-129, and 229-249; these read YVVSFIASLQAGIVAVPLSIP, VFADTAPAIVLTASSVVDNVV, and FVLGLILPILAGIPAVLTSPI. Residues 353–375 form a disordered region; it reads IVQFDPQKLPDGQAERTESDGGT.

The protein belongs to the ATP-dependent AMP-binding enzyme family.

It localises to the cell membrane. The chain is Putative fatty-acid--CoA ligase fadD25 (fadD25) from Mycobacterium tuberculosis (strain CDC 1551 / Oshkosh).